The primary structure comprises 947 residues: Protocadherin alpha-4 (947 aa).

An N-terminal signal peptide occupies residues 1-29; sequence MEFSWGSGQESRRLLLLLLLLAAWEAGNG. Cadherin domains follow at residues 30–133, 134–242, 243–350, 351–455, 456–565, and 588–678; these read QLHY…PPVF, PATQ…APAF, DRTI…VPDL, EFKS…APAF, AQPE…APAL, and GHVV…APKA. The Extracellular segment spans residues 30–697; that stretch reads QLHYSVSEEA…GPDAALVDVN (668 aa). Cysteines 96 and 102 form a disulfide. N139, N257, and N265 each carry an N-linked (GlcNAc...) asparagine glycan. N548 carries N-linked (GlcNAc...) asparagine glycosylation. The chain crosses the membrane as a helical span at residues 698–718; sequence VYLIIAICAVSSLLVLTLLLY. The Cytoplasmic segment spans residues 719-947; that stretch reads TALRCSALPT…GNSTTDNSDQ (229 aa). 6 PXXP repeats span residues 734-737, 774-777, 796-799, 829-832, 870-873, and 888-891; these read PGKP, PSLP, PRQP, PGGP, PGNP, and PGSP. The tract at residues 734–891 is 6 X 4 AA repeats of P-X-X-P; that stretch reads PGKPTLVCSS…PDKFIIPGSP (158 aa). The segment at 738-947 is required for interaction with FYN; that stretch reads TLVCSSAVGS…GNSTTDNSDQ (210 aa). Disordered stretches follow at residues 754–805, 828–853, and 868–947; these read RRPR…DWRY, GPGG…EVSP, and YGPG…NSDQ. The span at 906–920 shows a compositional bias: basic and acidic residues; sequence DKSDFITFGKKEETK.

In terms of assembly, forms homodimers in trans (molecules expressed by two different cells). Forms promiscuous heterodimers in cis (at the plasma membrane of the same cell) with other protocadherins. Interacts with FYN.

Its subcellular location is the cell membrane. Its function is as follows. Calcium-dependent cell-adhesion protein involved in cells self-recognition and non-self discrimination. Thereby, it is involved in the establishment and maintenance of specific neuronal connections in the brain. This is Protocadherin alpha-4 from Homo sapiens (Human).